The chain runs to 87 residues: uncharacterized protein (87 aa).

This is an uncharacterized protein from Escherichia coli (Bacteriophage T4).